Here is a 387-residue protein sequence, read N- to C-terminus: Succinate--CoA ligase [ADP-forming] subunit beta (387 aa).

Positions 9–236 (KELFAKHNVP…RAATDPLELK (228 aa)) constitute an ATP-grasp domain. Residues Lys-45, 52 to 54 (GRG), Ser-94, and Glu-99 each bind ATP. 2 residues coordinate Mg(2+): Asn-191 and Asp-205. Substrate-binding positions include Asn-256 and 318–320 (GIT).

It belongs to the succinate/malate CoA ligase beta subunit family. In terms of assembly, heterotetramer of two alpha and two beta subunits. The cofactor is Mg(2+).

The enzyme catalyses succinate + ATP + CoA = succinyl-CoA + ADP + phosphate. It carries out the reaction GTP + succinate + CoA = succinyl-CoA + GDP + phosphate. It functions in the pathway carbohydrate metabolism; tricarboxylic acid cycle; succinate from succinyl-CoA (ligase route): step 1/1. Its function is as follows. Succinyl-CoA synthetase functions in the citric acid cycle (TCA), coupling the hydrolysis of succinyl-CoA to the synthesis of either ATP or GTP and thus represents the only step of substrate-level phosphorylation in the TCA. The beta subunit provides nucleotide specificity of the enzyme and binds the substrate succinate, while the binding sites for coenzyme A and phosphate are found in the alpha subunit. The protein is Succinate--CoA ligase [ADP-forming] subunit beta of Mycobacterium tuberculosis (strain CDC 1551 / Oshkosh).